The following is a 98-amino-acid chain: NADH-ubiquinone oxidoreductase chain 4L (98 aa).

The next 3 helical transmembrane spans lie at 1–21 (MSLVYMNIMTAFMVALAGLLM), 29–49 (SLLCLEGMMLSLFVMASLTIL), and 59–79 (MPIILLVFAACEAALGLSLLV).

It belongs to the complex I subunit 4L family. As to quaternary structure, core subunit of respiratory chain NADH dehydrogenase (Complex I) which is composed of 45 different subunits.

The protein localises to the mitochondrion inner membrane. It carries out the reaction a ubiquinone + NADH + 5 H(+)(in) = a ubiquinol + NAD(+) + 4 H(+)(out). In terms of biological role, core subunit of the mitochondrial membrane respiratory chain NADH dehydrogenase (Complex I) which catalyzes electron transfer from NADH through the respiratory chain, using ubiquinone as an electron acceptor. Part of the enzyme membrane arm which is embedded in the lipid bilayer and involved in proton translocation. This Cervus elaphus (Red deer) protein is NADH-ubiquinone oxidoreductase chain 4L (MT-ND4L).